A 92-amino-acid polypeptide reads, in one-letter code: Large ribosomal subunit protein bL27 (92 aa).

Positions 1–9 (MIKANLQLF) are excised as a propeptide.

Belongs to the bacterial ribosomal protein bL27 family. The N-terminus is cleaved by ribosomal processing cysteine protease Prp.

The polypeptide is Large ribosomal subunit protein bL27 (Acetivibrio thermocellus (strain ATCC 27405 / DSM 1237 / JCM 9322 / NBRC 103400 / NCIMB 10682 / NRRL B-4536 / VPI 7372) (Clostridium thermocellum)).